The chain runs to 130 residues: Histone H2A type 1 (130 aa).

The disordered stretch occupies residues Met1–Ala22. The residue at position 2 (Ser2) is an N-acetylserine. Residue Ser2 is modified to Phosphoserine; by RPS6KA5. Arg4 is subject to Citrulline; alternate. A Symmetric dimethylarginine; by PRMT5; alternate modification is found at Arg4. Lys6 carries the N6-(2-hydroxyisobutyryl)lysine modification. Positions Gln7–Ser19 are enriched in basic residues. Lys10 bears the N6-(2-hydroxyisobutyryl)lysine; alternate mark. Lys10 is subject to N6-lactoyllysine; alternate. Lys10 carries the post-translational modification N6-succinyllysine; alternate. Glycyl lysine isopeptide (Lys-Gly) (interchain with G-Cter in ubiquitin) cross-links involve residues Lys14 and Lys16. At Lys37 the chain carries N6-(2-hydroxyisobutyryl)lysine; alternate. Lys37 is subject to N6-(beta-hydroxybutyryl)lysine; alternate. Lys37 bears the N6-crotonyllysine; alternate mark. 2 positions are modified to N6-(2-hydroxyisobutyryl)lysine: Lys75 and Lys76. The residue at position 96 (Lys96) is an N6-(2-hydroxyisobutyryl)lysine; alternate. Lys96 carries the N6-succinyllysine; alternate modification. Lys96 carries the N6-glutaryllysine; alternate modification. Lys100 is modified (N6-glutaryllysine). At Gln105 the chain carries N5-methylglutamine. Position 119 is an N6-(2-hydroxyisobutyryl)lysine; alternate (Lys119). Lys119 and Lys120 each carry N6-crotonyllysine; alternate. N6-glutaryllysine; alternate is present on residues Lys119 and Lys120. Lys120 participates in a covalent cross-link: Glycyl lysine isopeptide (Lys-Gly) (interchain with G-Cter in ubiquitin); alternate. Position 121 is a phosphothreonine; by DCAF1 (Thr121). Lys126 is subject to N6-crotonyllysine; alternate. Lys126 is modified (N6-glutaryllysine; alternate).

The protein belongs to the histone H2A family. As to quaternary structure, the nucleosome is a histone octamer containing two molecules each of H2A, H2B, H3 and H4 assembled in one H3-H4 heterotetramer and two H2A-H2B heterodimers. The octamer wraps approximately 147 bp of DNA. Interacts with VRK1; the interaction is mediated by the nucleosome acidic patch, a cluster of negatively charged residues of H2A and H2B forming a cleft within the nucleosome core. Deiminated on Arg-4 in granulocytes upon calcium entry. Post-translationally, monoubiquitination of Lys-120 (H2AK119Ub) by RING1, TRIM37 and RNF2/RING2 complex gives a specific tag for epigenetic transcriptional repression and participates in X chromosome inactivation of female mammals. It is involved in the initiation of both imprinted and random X inactivation. Ubiquitinated H2A is enriched in inactive X chromosome chromatin. Ubiquitination of H2A functions downstream of methylation of 'Lys-27' of histone H3 (H3K27me). H2AK119Ub by RNF2/RING2 can also be induced by ultraviolet and may be involved in DNA repair. Following DNA double-strand breaks (DSBs), it is ubiquitinated through 'Lys-63' linkage of ubiquitin moieties by the E2 ligase UBE2N and the E3 ligases RNF8 and RNF168, leading to the recruitment of repair proteins to sites of DNA damage. Ubiquitination at Lys-14 and Lys-16 (H2AK13Ub and H2AK15Ub, respectively) in response to DNA damage is initiated by RNF168 that mediates monoubiquitination at these 2 sites, and 'Lys-63'-linked ubiquitin are then conjugated to monoubiquitin; RNF8 is able to extend 'Lys-63'-linked ubiquitin chains in vitro. H2AK119Ub and ionizing radiation-induced 'Lys-63'-linked ubiquitination (H2AK13Ub and H2AK15Ub) are distinct events. In terms of processing, phosphorylation on Ser-2 (H2AS1ph) is enhanced during mitosis. Phosphorylation on Ser-2 by RPS6KA5/MSK1 directly represses transcription. Acetylation of H3 inhibits Ser-2 phosphorylation by RPS6KA5/MSK1. Phosphorylation at Thr-121 (H2AT120ph) by DCAF1 is present in the regulatory region of many tumor suppresor genes and down-regulates their transcription. Symmetric dimethylation on Arg-4 by the PRDM1/PRMT5 complex may play a crucial role in the germ-cell lineage. Post-translationally, glutamine methylation at Gln-105 (H2AQ104me) by FBL is specifically dedicated to polymerase I. It is present at 35S ribosomal DNA locus and impairs binding of the FACT complex. In terms of processing, crotonylation (Kcr) is specifically present in male germ cells and marks testis-specific genes in post-meiotic cells, including X-linked genes that escape sex chromosome inactivation in haploid cells. Crotonylation marks active promoters and enhancers and confers resistance to transcriptional repressors. It is also associated with post-meiotically activated genes on autosomes. Lactylated in macrophages by EP300/P300 by using lactoyl-CoA directly derived from endogenous or exogenous lactate, leading to stimulates gene transcription.

It is found in the nucleus. Its subcellular location is the chromosome. In terms of biological role, core component of nucleosome. Nucleosomes wrap and compact DNA into chromatin, limiting DNA accessibility to the cellular machineries which require DNA as a template. Histones thereby play a central role in transcription regulation, DNA repair, DNA replication and chromosomal stability. DNA accessibility is regulated via a complex set of post-translational modifications of histones, also called histone code, and nucleosome remodeling. In Bos taurus (Bovine), this protein is Histone H2A type 1.